The following is a 141-amino-acid chain: Succinate dehydrogenase assembly factor 2, mitochondrial (141 aa).

Belongs to the SDHAF2 family. Interacts with the flavoprotein subunit within the SDH catalytic dimer.

Its subcellular location is the mitochondrion matrix. Its function is as follows. Plays an essential role in the assembly of succinate dehydrogenase (SDH), an enzyme complex (also referred to as respiratory complex II) that is a component of both the tricarboxylic acid (TCA) cycle and the mitochondrial electron transport chain, and which couples the oxidation of succinate to fumarate with the reduction of ubiquinone (coenzyme Q) to ubiquinol. Required for flavinylation (covalent attachment of FAD) of the flavoprotein subunit of the SDH catalytic dimer. The sequence is that of Succinate dehydrogenase assembly factor 2, mitochondrial from Dictyostelium discoideum (Social amoeba).